Here is a 739-residue protein sequence, read N- to C-terminus: Sulfate transporter (739 aa).

Residues 1 to 44 form a disordered region; the sequence is MSSENKEQHNLSPRDLPEEAYGFPPELPLGAQRGSSTDLRQFEP. Serine 12 bears the Phosphoserine mark. Helical transmembrane passes span 112-132 and 137-157; these read MMSG…YSLL and PIYG…FGTS. N-linked (GlcNAc...) asparagine glycosylation is present at asparagine 205. The next 2 membrane-spanning stretches (helical) occupy residues 227 to 247 and 255 to 275; these read FMAG…VSVY and GFVT…LLGL. N-linked (GlcNAc...) asparagine glycosylation is present at asparagine 357. Helical transmembrane passes span 378–398, 420–440, 455–475, and 524–544; these read LIPN…AITV, AIGF…SAAL, LSAI…APLF, and LLST…CVIL. Residues 568 to 719 enclose the STAS domain; sequence TYKNLRSKSG…YSLSEAVAFA (152 aa).

It belongs to the SLC26A/SulP transporter (TC 2.A.53) family. Post-translationally, N-glycosylated. Cartilage and intestine. Expressed in the kidney (at protein level).

The protein localises to the cell membrane. It is found in the apical cell membrane. It carries out the reaction oxalate(in) + sulfate(out) = oxalate(out) + sulfate(in). It catalyses the reaction sulfate(out) + 2 chloride(in) = sulfate(in) + 2 chloride(out). The enzyme catalyses oxalate(out) + 2 chloride(in) = oxalate(in) + 2 chloride(out). The catalysed reaction is bromide(in) + chloride(out) = bromide(out) + chloride(in). It carries out the reaction nitrate(in) + chloride(out) = nitrate(out) + chloride(in). It catalyses the reaction iodide(in) + chloride(out) = iodide(out) + chloride(in). In terms of biological role, sulfate transporter which mediates sulfate uptake into chondrocytes in order to maintain adequate sulfation of proteoglycans which is needed for cartilage development. Mediates electroneutral anion exchange of sulfate ions for oxalate ions, sulfate and oxalate ions for chloride and/or hydroxyl ions and chloride ions for bromide, iodide and nitrate ions. The coupling of sulfate transport to both hydroxyl and chloride ions likely serves to ensure transport at both acidic pH when most sulfate uptake is mediated by sulfate-hydroxide exchange and alkaline pH when most sulfate uptake is mediated by sulfate-chloride exchange. Essential for chondrocyte proliferation, differentiation and cell size expansion. The polypeptide is Sulfate transporter (Slc26a2) (Rattus norvegicus (Rat)).